The chain runs to 463 residues: Ribosomal protein uS12 methylthiotransferase RimO (463 aa).

The segment at methionine 1–arginine 26 is disordered. A compositionally biased stretch (low complexity) spans proline 8–proline 19. Positions proline 30–proline 140 constitute an MTTase N-terminal domain. The [4Fe-4S] cluster site is built by cysteine 39, cysteine 75, cysteine 104, cysteine 171, cysteine 175, and cysteine 178. Residues leucine 157–alanine 395 form the Radical SAM core domain. The region spanning alanine 398 to leucine 463 is the TRAM domain.

Belongs to the methylthiotransferase family. RimO subfamily. It depends on [4Fe-4S] cluster as a cofactor.

Its subcellular location is the cytoplasm. The catalysed reaction is L-aspartate(89)-[ribosomal protein uS12]-hydrogen + (sulfur carrier)-SH + AH2 + 2 S-adenosyl-L-methionine = 3-methylsulfanyl-L-aspartate(89)-[ribosomal protein uS12]-hydrogen + (sulfur carrier)-H + 5'-deoxyadenosine + L-methionine + A + S-adenosyl-L-homocysteine + 2 H(+). In terms of biological role, catalyzes the methylthiolation of an aspartic acid residue of ribosomal protein uS12. This Paracoccus denitrificans (strain Pd 1222) protein is Ribosomal protein uS12 methylthiotransferase RimO.